A 416-amino-acid polypeptide reads, in one-letter code: Olfactomedin-like protein 3 (416 aa).

The N-terminal stretch at 1-18 (MAGIVACILLVFVTVITA) is a signal peptide. The stretch at 48–129 (RYSGELRDFK…KKKEKYEKIT (82 aa)) forms a coiled coil. The Olfactomedin-like domain occupies 155–411 (YCSDTISQVT…QMLYKLNMKH (257 aa)). A disulfide bridge links Cys-156 with Cys-338. Asn-198 and Asn-258 each carry an N-linked (GlcNAc...) asparagine glycan.

It belongs to the OLFML3 family. Interacts (via coiled coil domain) with BMP1 and (via olfactomedin-like domain) CHRD.

Its subcellular location is the secreted. Functionally, secreted scaffold protein that plays an essential role in dorsoventral patterning during early development. Stabilizes axial formation by restricting chordin (CHRD) activity on the dorsal side. Acts by facilitating the association between the tolloid protease BMP1 and its substrate chordin (CHRD), leading to enhance chordin (CHRD) degradation by BMP1. In Xenopus tropicalis (Western clawed frog), this protein is Olfactomedin-like protein 3 (olfml3).